A 444-amino-acid chain; its full sequence is 23S rRNA (uracil(1939)-C(5))-methyltransferase RlmD (444 aa).

Residues 5–67 form the TRAM domain; sequence RSRIDRTPFQ…RHFDEARTVE (63 aa). Positions 80, 86, 89, and 168 each coordinate [4Fe-4S] cluster. 6 residues coordinate S-adenosyl-L-methionine: Q276, F305, N310, E326, D353, and D374. The active-site Nucleophile is C400.

The protein belongs to the class I-like SAM-binding methyltransferase superfamily. RNA M5U methyltransferase family. RlmD subfamily.

The enzyme catalyses uridine(1939) in 23S rRNA + S-adenosyl-L-methionine = 5-methyluridine(1939) in 23S rRNA + S-adenosyl-L-homocysteine + H(+). Functionally, catalyzes the formation of 5-methyl-uridine at position 1939 (m5U1939) in 23S rRNA. The protein is 23S rRNA (uracil(1939)-C(5))-methyltransferase RlmD of Stenotrophomonas maltophilia (strain K279a).